Here is a 210-residue protein sequence, read N- to C-terminus: Ribosomal RNA large subunit methyltransferase E (210 aa).

5 residues coordinate S-adenosyl-L-methionine: glycine 67, tryptophan 69, aspartate 87, aspartate 103, and aspartate 128. Residue lysine 168 is the Proton acceptor of the active site.

It belongs to the class I-like SAM-binding methyltransferase superfamily. RNA methyltransferase RlmE family.

It is found in the cytoplasm. The enzyme catalyses uridine(2552) in 23S rRNA + S-adenosyl-L-methionine = 2'-O-methyluridine(2552) in 23S rRNA + S-adenosyl-L-homocysteine + H(+). In terms of biological role, specifically methylates the uridine in position 2552 of 23S rRNA at the 2'-O position of the ribose in the fully assembled 50S ribosomal subunit. In Psychrobacter cryohalolentis (strain ATCC BAA-1226 / DSM 17306 / VKM B-2378 / K5), this protein is Ribosomal RNA large subunit methyltransferase E.